The chain runs to 466 residues: Alpha-1A adrenergic receptor (466 aa).

Topologically, residues 1–25 (MVFLSGNASDSSNCTHPPAPVNISK) are extracellular. Asparagine 7, asparagine 13, and asparagine 22 each carry an N-linked (GlcNAc...) asparagine glycan. A helical transmembrane segment spans residues 26–51 (AILLGVILGGLILFGVLGNILVILSV). Topologically, residues 52 to 63 (ACHRHLHSVTHY) are cytoplasmic. The helical transmembrane segment at 64 to 89 (YIVNLAVADLLLTSTVLPFSAIFEIL) threads the bilayer. Over 90-99 (GYWAFGRVFC) the chain is Extracellular. A helical membrane pass occupies residues 100–122 (NIWAAVDVLCCTASIISLCVISI). The Cytoplasmic portion of the chain corresponds to 123-143 (DRYIGVSYPLRYPTIVTQRRG). Residues 144 to 168 (LRALLCVWAFSLVISVGPLFGWRQP) form a helical membrane-spanning segment. At 169-181 (APDDETICQINEE) the chain is on the extracellular side. The chain crosses the membrane as a helical span at residues 182-205 (PGYVLFSALGSFYVPLTIILAMYC). Residues 206 to 272 (RVYVVAKRES…KFSREKKAAK (67 aa)) are Cytoplasmic-facing. The helical transmembrane segment at 273–297 (TLGIVVGCFVLCWLPFFLVMPIGSF) threads the bilayer. The Extracellular portion of the chain corresponds to 298–304 (FPDFKPP). Residues 305–329 (ETVFKIVFWLGYLNSCINPIIYPCS) traverse the membrane as a helical segment. Residues 330 to 466 (SQEFKKAFQN…ISLSENGEEV (137 aa)) are Cytoplasmic-facing. The short motif at 334–349 (KKAFQNVLKIQCLRRK) is the Nuclear localization signal element. A lipid anchor (S-palmitoyl cysteine) is attached at cysteine 345.

This sequence belongs to the G-protein coupled receptor 1 family. Adrenergic receptor subfamily. ADRA1A sub-subfamily. Homo- and heterooligomer. Heterooligomerizes with ADRA1B homooligomers in cardiac myocytes. Interacts with CAVIN4. In terms of tissue distribution, abundant in liver, vas deferens, brain, and aorta, but not in heart.

It is found in the nucleus membrane. The protein localises to the cell membrane. It localises to the cytoplasm. Its subcellular location is the membrane. The protein resides in the caveola. This alpha-adrenergic receptor mediates its action by association with G proteins that activate a phosphatidylinositol-calcium second messenger system. Its effect is mediated by G(q) and G(11) proteins. Nuclear ADRA1A-ADRA1B heterooligomers regulate phenylephrine (PE)-stimulated ERK signaling in cardiac myocytes. In Oryctolagus cuniculus (Rabbit), this protein is Alpha-1A adrenergic receptor (ADRA1A).